Reading from the N-terminus, the 240-residue chain is Uridylate kinase (240 aa).

12-15 (KLSG) contacts ATP. An involved in allosteric activation by GTP region spans residues 20-25 (GEQGNG). Position 54 (Gly-54) interacts with UMP. The ATP site is built by Gly-55 and Arg-59. Residues Asp-74 and 135 to 142 (TGNPYFST) each bind UMP. Asn-163, Tyr-169, and Asp-172 together coordinate ATP.

The protein belongs to the UMP kinase family. Homohexamer.

The protein localises to the cytoplasm. It catalyses the reaction UMP + ATP = UDP + ADP. The protein operates within pyrimidine metabolism; CTP biosynthesis via de novo pathway; UDP from UMP (UMPK route): step 1/1. With respect to regulation, allosterically activated by GTP. Inhibited by UTP. Catalyzes the reversible phosphorylation of UMP to UDP. This is Uridylate kinase from Bacillus velezensis (strain DSM 23117 / BGSC 10A6 / LMG 26770 / FZB42) (Bacillus amyloliquefaciens subsp. plantarum).